Reading from the N-terminus, the 306-residue chain is Prophage bactoprenol glucosyl transferase homolog (306 aa).

Topologically, residues 1–227 (MKISLVVPVF…ITSFSTFPLR (227 aa)) are cytoplasmic. Residues 228-248 (IWTYIGLVVASVAFIYGAWMI) form a helical membrane-spanning segment. Residues 249–262 (LDTIIFGNAVRGYP) lie on the Periplasmic side of the membrane. The helical transmembrane segment at 263-283 (SLLVSILFLGGIQMIGIGVLG) threads the bilayer. Topologically, residues 284–306 (EYIGRTYIETKKRPKYIIKRVKK) are cytoplasmic.

This sequence belongs to the glycosyltransferase 2 family. GtrB subfamily.

The protein localises to the cell inner membrane. Its function is as follows. Involved in O antigen modification. Catalyzes the transfer of the glucose residue from UDP-glucose to a lipid carrier. The chain is Prophage bactoprenol glucosyl transferase homolog (yfdH) from Escherichia coli (strain K12).